We begin with the raw amino-acid sequence, 311 residues long: Avirulence protein ATR1 (311 aa).

The first 15 residues, 1–15 (MRVCYFVLVPSVALA), serve as a signal peptide directing secretion. The RxLR-dEER motif lies at 48–62 (RALRAQTALDDDEER). 2 WY domain regions span residues 127 to 209 (DEAL…VKCV) and 210 to 311 (ESED…IYSV).

Belongs to the RxLR effector family. In terms of assembly, monomer. Interacts with defense protein RPP1 from several ecotypes including RPP1-NdA, RPP1-WsB, RPP1-EstA and RPP1-ZdrA, via their leucine-rich repeats (LLRs).

The protein resides in the secreted. The protein localises to the host cytoplasm. In terms of biological role, secreted effector that acts as an elicitor of hypersensitive response (HR) specifically on plants carrying both defense protein RPP1 from several ecotypes including RPP1-NdA, RPP1-WsB, RPP1-EstA and RPP1-ZdrA. The polypeptide is Avirulence protein ATR1 (Hyaloperonospora arabidopsidis (strain Emoy2) (Downy mildew agent)).